We begin with the raw amino-acid sequence, 562 residues long: Ikaros family zinc finger protein (562 aa).

C2H2-type zinc fingers lie at residues 45 to 67 (IKCE…IRSH), 73 to 95 (FKCH…YKIH), and 101 to 123 (FQCP…MRIH). The C2H2-type 4; degenerate zinc-finger motif lies at 129–152 (YRCSYCARSYKSRQSMKEHEYQCP). Disordered regions lie at residues 178–210 (NPLA…PPYP), 293–342 (QNQQ…VKPT), 361–404 (QLED…KEDD), and 451–473 (DESK…STQD). Positions 307 to 326 (PSLSEATPSSHSSHSSAEDS) are enriched in low complexity. Residues 327–336 (GQVNKFSPTE) are compositionally biased toward polar residues. The segment covering 369 to 383 (DSRKRPHSFESEPTP) has biased composition (basic and acidic residues). Positions 456-471 (EISSVDSRSPLDQSST) are enriched in polar residues. 2 consecutive C2H2-type zinc fingers follow at residues 494 to 516 (WECK…MGVH) and 522 to 546 (LVCN…HHQH).

This sequence belongs to the Ikaros C2H2-type zinc-finger protein family. As to expression, expression is strongest in the anterior Fol cells of the oikoplastic epithelium.

The protein localises to the nucleus. The chain is Ikaros family zinc finger protein from Oikopleura dioica (Tunicate).